The primary structure comprises 312 residues: Glycine--tRNA ligase alpha subunit (312 aa).

Belongs to the class-II aminoacyl-tRNA synthetase family. Tetramer of two alpha and two beta subunits.

It is found in the cytoplasm. The enzyme catalyses tRNA(Gly) + glycine + ATP = glycyl-tRNA(Gly) + AMP + diphosphate. In Nostoc punctiforme (strain ATCC 29133 / PCC 73102), this protein is Glycine--tRNA ligase alpha subunit.